We begin with the raw amino-acid sequence, 30 residues long: uncharacterized protein (30 aa).

Positions 1–22 are cleaved as a signal peptide; the sequence is MRFLFFLPPSFITSFLYLALYS.

This is an uncharacterized protein from Schizosaccharomyces pombe (strain 972 / ATCC 24843) (Fission yeast).